The chain runs to 514 residues: Uronyl 2-sulfotransferase homolog pip (514 aa).

At 1 to 30 (MSLNAERSYKMKLRDVENAFKYRRIPYPKR) the chain is on the cytoplasmic side. A helical; Signal-anchor for type II membrane protein transmembrane segment spans residues 31-50 (SVELIALLAISCTFFLFMHT). The Lumenal portion of the chain corresponds to 51–514 (NKLNSRLKEM…EQQNEYNEDY (464 aa)). A compositionally biased stretch (basic and acidic residues) spans 112–121 (HDRRSSEEQL). The tract at residues 112–185 (HDRRSSEEQL…DEDEVEENDD (74 aa)) is disordered. The segment covering 127–140 (HGHHHDHHSHHHHM) has biased composition (basic residues). Over residues 155–170 (HDKQLAVPDNKHKEDE) the composition is skewed to basic and acidic residues. Positions 171-185 (VHYEDDEDEVEENDD) are enriched in acidic residues. Residue Asn207 is glycosylated (N-linked (GlcNAc...) asparagine). His282 is an active-site residue. Asn287, Asn416, Asn451, and Asn467 each carry an N-linked (GlcNAc...) asparagine glycan.

The protein belongs to the sulfotransferase 3 family. Interacts with wbl/windbeutel; the interaction is direct and does not require pip to be folded. In terms of tissue distribution, ovary-specific. Specifically expressed in the ventral follicle cells of stage 9-10 egg chambers. As to expression, expressed in ovaries. Specifically expressed in the ventral follicle cells of stage 9-10 egg chambers.

The protein resides in the golgi apparatus membrane. Its function is as follows. Sulfotransferase involved in dorsoventral axis patterning in early embryos. Required for the ventral activation of ea/easter by the protease snk in the perivitelline space between the embryonic membrane and the eggshell; activation of ea requires both activation of the ndl-gd-snk protease cascade and sulfation of a vitelline membrane component by pip. Probably acts by mediating the sulfation of some glycoprotein or glycosaminoglycan stably deposited in the vitelline membrane, whose ventrally localized modification leads to spatially restricted activation of the protease cascade resulting in localized activation of the spz Toll receptor ligand by ea. Probably required redundantly with isoform H for dorsoventral axis patterning in embryos. Lacks 2-O-sulfotransferase activity towards completely desulfated N-sulfated (CDSNS) heparin, chondroitin, and chondroitin sulfate A, B (dermatan sulfate), and C. Sulfates several components of the eggshell vitelline membrane, including Vml, Vm26Aa, Vm32E and psd/palisade/Fcp26Aa. In terms of biological role, probably required redundantly with isoform A for dorsoventral axis patterning in embryos. Functionally, lacks 2-O-sulfotransferase activity towards CDSNS heparin, chondroitin, and chondroitin sulfate A, B (dermatan sulfate), and C. The chain is Uronyl 2-sulfotransferase homolog pip from Drosophila melanogaster (Fruit fly).